A 37-amino-acid chain; its full sequence is Potassium channel toxin alpha-KTx 1.3 (37 aa).

Gln1 is modified (pyrrolidone carboxylic acid). 3 cysteine pairs are disulfide-bonded: Cys7/Cys28, Cys13/Cys33, and Cys17/Cys35. The segment at 26-33 (GKCMGKKC) is interaction with Ca(2+)-activated K(+) channels.

It belongs to the short scorpion toxin superfamily. Potassium channel inhibitor family. Alpha-KTx 01 subfamily. In terms of tissue distribution, expressed by the venom gland.

The protein resides in the secreted. Its function is as follows. Blocks selectively the high conductance calcium-activated (maxi-K) potassium channels (KCa1.1/KCNMA1). This is Potassium channel toxin alpha-KTx 1.3 from Hottentotta tamulus (Eastern Indian scorpion).